We begin with the raw amino-acid sequence, 129 residues long: Natriuretic peptides B (129 aa).

An N-terminal signal peptide occupies residues 1-26 (MDPQTALSRALLLLLFLHLSLLGCRS). Residues Cys-107 and Cys-123 are joined by a disulfide bond.

This sequence belongs to the natriuretic peptide family. Post-translationally, the precursor molecule is proteolytically cleaved, possibly by FURIN or CORIN, to produce the active peptide. May undergo further proteolytic cleavage by various proteases such as DPP4, MME and possibly FAP, to give rise to a variety of shorter peptides. May be cleaved at Pro-99 by the prolyl endopeptidase FAP (seprase) activity (in vitro). May be degraded by IDE. During IDE degradation, the resulting products initially increase the activation of NPR1 and can also stimulate NPR2 to produce cGMP before the fragments are completely degraded and inactivated by IDE (in vitro).

It localises to the secreted. Its function is as follows. Cardiac hormone that plays a key role in mediating cardio-renal homeostasis. May also function as a paracrine antifibrotic factor in the heart. Acts by specifically binding and stimulating NPR1 to produce cGMP, which in turn activates effector proteins that drive various biological responses. Involved in regulating the extracellular fluid volume and maintaining the fluid-electrolyte balance through natriuresis, diuresis, vasorelaxation, and inhibition of renin and aldosterone secretion. Binds the clearance receptor NPR3. This Bos taurus (Bovine) protein is Natriuretic peptides B (NPPB).